The chain runs to 61 residues: U-stichotoxin-Hcr1b (61 aa).

Residues 1-19 (PILIFAFVMFAVMVNAKPS) form the signal peptide. Positions 20 to 31 (IDDAEMKREPKP) are excised as a propeptide. 2 disulfides stabilise this stretch: Cys-38/Cys-49 and Cys-41/Cys-56.

This sequence belongs to the Hau1a/HC18/HC19 family.

It is found in the secreted. The protein localises to the nematocyst. Functionally, toxin that is lethal to crab. Does not produce the typical symptoms associated with sodium channel toxins in crabs, suggesting that it likely does not act on sodium channels. The protein is U-stichotoxin-Hcr1b of Radianthus crispa (Leathery sea anemone).